The chain runs to 425 residues: Trigger factor (425 aa).

The PPIase FKBP-type domain maps to glycine 158–proline 231.

Belongs to the FKBP-type PPIase family. Tig subfamily.

It localises to the cytoplasm. It carries out the reaction [protein]-peptidylproline (omega=180) = [protein]-peptidylproline (omega=0). Functionally, involved in protein export. Acts as a chaperone by maintaining the newly synthesized protein in an open conformation. Functions as a peptidyl-prolyl cis-trans isomerase. In Thermotoga maritima (strain ATCC 43589 / DSM 3109 / JCM 10099 / NBRC 100826 / MSB8), this protein is Trigger factor (tig).